The primary structure comprises 394 residues: Flavohemoprotein (394 aa).

In terms of domain architecture, Globin spans 1–136 (MISQQTIDIV…LANVFITREE (136 aa)). His-85 is a binding site for heme b. Active-site charge relay system residues include Tyr-95 and Glu-135. Positions 147 to 394 (GGWRGTREFT…YECFGPHKVL (248 aa)) are reductase. The region spanning 150–255 (RGTREFTLIE…AAPAGDFFLD (106 aa)) is the FAD-binding FR-type domain. FAD-binding positions include Tyr-188 and 204 to 207 (RQYS). NADP(+) is bound at residue 268 to 273 (GVGLTP). 387–390 (CFGP) is an FAD binding site.

It belongs to the globin family. Two-domain flavohemoproteins subfamily. This sequence in the C-terminal section; belongs to the flavoprotein pyridine nucleotide cytochrome reductase family. The cofactor is heme b. FAD serves as cofactor.

The catalysed reaction is 2 nitric oxide + NADPH + 2 O2 = 2 nitrate + NADP(+) + H(+). It catalyses the reaction 2 nitric oxide + NADH + 2 O2 = 2 nitrate + NAD(+) + H(+). Functionally, is involved in NO detoxification in an aerobic process, termed nitric oxide dioxygenase (NOD) reaction that utilizes O(2) and NAD(P)H to convert NO to nitrate, which protects the bacterium from various noxious nitrogen compounds. Therefore, plays a central role in the inducible response to nitrosative stress. This chain is Flavohemoprotein, found in Photobacterium profundum (strain SS9).